We begin with the raw amino-acid sequence, 1116 residues long: Phosphatidylinositol 4-kinase beta 2 (1116 aa).

The region spanning methionine 1 to alanine 143 is the PIK helical domain. 8 tandem repeats follow at residues alanine 210–leucine 229, cysteine 242–glutamate 261, serine 264–glutamate 283, asparagine 286–glutamate 304, serine 307–glutamate 326, alanine 329–glutamate 348, alanine 351–lysine 370, and glutamate 378–arginine 396. Positions alanine 210–aspartate 507 are 11 X 20 AA approximate repeats (PPC). The segment covering glutamate 394–threonine 404 has biased composition (basic and acidic residues). The interval glutamate 394 to aspartate 417 is disordered. Positions aspartate 405–glycine 415 are enriched in acidic residues. Residues asparagine 418–proline 436 form repeat 9. Serine 447 and serine 452 each carry phosphoserine. 2 repeat units span residues serine 452–lysine 470 and proline 488–aspartate 507. Disordered stretches follow at residues lysine 515–asparagine 540 and glycine 794–glutamine 813. The 272-residue stretch at glutamate 830–arginine 1101 folds into the PI3K/PI4K catalytic domain. The segment at arginine 836 to aspartate 842 is G-loop. The interval glutamine 964–asparagine 972 is catalytic loop. The interval histidine 983–threonine 1007 is activation loop.

It belongs to the PI3/PI4-kinase family. Type III PI4K subfamily.

It localises to the cell membrane. It is found in the golgi apparatus. The protein resides in the trans-Golgi network. Its subcellular location is the cytoplasmic vesicle membrane. It catalyses the reaction a 1,2-diacyl-sn-glycero-3-phospho-(1D-myo-inositol) + ATP = a 1,2-diacyl-sn-glycero-3-phospho-(1D-myo-inositol 4-phosphate) + ADP + H(+). Functionally, acts on phosphatidylinositol (PtdIns) in the first committed step in the production of the second messenger inositol-1,4,5-trisphosphate. Necessary for proper organization of the trans-Golgi network (TGN) and post-Golgi secretion in root hairs. Together with PI4KB1, required during polarized root hair expansion and pollen tube elongation. Functions redundantly with PI4KB1 upstream of the cold response phosphoinositide-dependent phospholipase C (PI-PLC) pathway. In Arabidopsis thaliana (Mouse-ear cress), this protein is Phosphatidylinositol 4-kinase beta 2 (PI4KB2).